A 320-amino-acid polypeptide reads, in one-letter code: 4-hydroxy-3-methylbut-2-enyl diphosphate reductase (320 aa).

Residue Cys-12 participates in [4Fe-4S] cluster binding. Residues His-41 and His-74 each coordinate (2E)-4-hydroxy-3-methylbut-2-enyl diphosphate. 2 residues coordinate dimethylallyl diphosphate: His-41 and His-74. Residues His-41 and His-74 each coordinate isopentenyl diphosphate. A [4Fe-4S] cluster-binding site is contributed by Cys-96. A (2E)-4-hydroxy-3-methylbut-2-enyl diphosphate-binding site is contributed by His-124. His-124 provides a ligand contact to dimethylallyl diphosphate. His-124 provides a ligand contact to isopentenyl diphosphate. Glu-126 acts as the Proton donor in catalysis. Residue Thr-167 participates in (2E)-4-hydroxy-3-methylbut-2-enyl diphosphate binding. Cys-197 provides a ligand contact to [4Fe-4S] cluster. Ser-225, Ser-226, Asn-227, and Ser-269 together coordinate (2E)-4-hydroxy-3-methylbut-2-enyl diphosphate. Ser-225, Ser-226, Asn-227, and Ser-269 together coordinate dimethylallyl diphosphate. Ser-225, Ser-226, Asn-227, and Ser-269 together coordinate isopentenyl diphosphate.

It belongs to the IspH family. [4Fe-4S] cluster is required as a cofactor.

The catalysed reaction is isopentenyl diphosphate + 2 oxidized [2Fe-2S]-[ferredoxin] + H2O = (2E)-4-hydroxy-3-methylbut-2-enyl diphosphate + 2 reduced [2Fe-2S]-[ferredoxin] + 2 H(+). It carries out the reaction dimethylallyl diphosphate + 2 oxidized [2Fe-2S]-[ferredoxin] + H2O = (2E)-4-hydroxy-3-methylbut-2-enyl diphosphate + 2 reduced [2Fe-2S]-[ferredoxin] + 2 H(+). Its pathway is isoprenoid biosynthesis; dimethylallyl diphosphate biosynthesis; dimethylallyl diphosphate from (2E)-4-hydroxy-3-methylbutenyl diphosphate: step 1/1. It participates in isoprenoid biosynthesis; isopentenyl diphosphate biosynthesis via DXP pathway; isopentenyl diphosphate from 1-deoxy-D-xylulose 5-phosphate: step 6/6. Catalyzes the conversion of 1-hydroxy-2-methyl-2-(E)-butenyl 4-diphosphate (HMBPP) into a mixture of isopentenyl diphosphate (IPP) and dimethylallyl diphosphate (DMAPP). Acts in the terminal step of the DOXP/MEP pathway for isoprenoid precursor biosynthesis. The sequence is that of 4-hydroxy-3-methylbut-2-enyl diphosphate reductase from Francisella tularensis subsp. novicida (strain U112).